The sequence spans 804 residues: Phenylalanine--tRNA ligase beta subunit (804 aa).

The 111-residue stretch at 38–148 (RAAFRAFTIA…ENAPVGTSFA (111 aa)) folds into the tRNA-binding domain. Positions 401–476 (HTARVIDFPV…RIHGINRIDP (76 aa)) constitute a B5 domain. D454, D460, E463, and E464 together coordinate Mg(2+). In terms of domain architecture, FDX-ACB spans 710–803 (SLFQSLKRDY…VAKQTGGVLR (94 aa)).

It belongs to the phenylalanyl-tRNA synthetase beta subunit family. Type 1 subfamily. As to quaternary structure, tetramer of two alpha and two beta subunits. Mg(2+) is required as a cofactor.

Its subcellular location is the cytoplasm. The enzyme catalyses tRNA(Phe) + L-phenylalanine + ATP = L-phenylalanyl-tRNA(Phe) + AMP + diphosphate + H(+). This chain is Phenylalanine--tRNA ligase beta subunit, found in Brucella abortus (strain 2308).